A 236-amino-acid chain; its full sequence is Thioredoxin-like 2-2, chloroplastic (236 aa).

Residues 1–82 (MAGVVRLTTT…LRRPKSQVVR (82 aa)) constitute a chloroplast transit peptide. The 138-residue stretch at 83–220 (VKVDENVAET…QLELGITLQT (138 aa)) folds into the Thioredoxin domain. Active-site nucleophile residues include C135 and C138. A disulfide bridge connects residues C135 and C138.

It belongs to the thioredoxin family.

The protein resides in the plastid. The protein localises to the chloroplast. Its function is as follows. Thiol-disulfide oxidoreductase that may participate in various redox reactions. Possesses insulin disulfide bonds reducing activity. This chain is Thioredoxin-like 2-2, chloroplastic, found in Arabidopsis thaliana (Mouse-ear cress).